The sequence spans 511 residues: Gap junction alpha-3 protein (511 aa).

The stretch at 2-15 is an intramembrane region; it reads GDWSFLGRLLENAQ. Residues 16–19 lie on the Cytoplasmic side of the membrane; sequence EHST. The helical transmembrane segment at 20–40 threads the bilayer; the sequence is VIGKVWLTVLFIFRILVLGAA. Over 41–71 the chain is Extracellular; that stretch reads AEEVWGDEQSDFTCNTQQPGCENVCYDKAFP. 3 disulfide bridges follow: cysteine 54/cysteine 214, cysteine 61/cysteine 208, and cysteine 65/cysteine 203. The helical transmembrane segment at 72–92 threads the bilayer; sequence ISHIRFWVLQIIFVSTPTLIY. Over 93 to 174 the chain is Cytoplasmic; the sequence is LGHVLHIVRM…GALLRTYIFN (82 aa). Basic and acidic residues predominate over residues 110 to 119; that stretch reads EEELKKRGSV. The disordered stretch occupies residues 110–143; that stretch reads EEELKKRGSVKDNNYPGAATSGGGSGGGNNFKDP. The segment covering 129–138 has biased composition (gly residues); sequence TSGGGSGGGN. Residues 175 to 195 form a helical membrane-spanning segment; it reads IIFKTLFEVGFIVGQYFLYGF. The Extracellular segment spans residues 196-223; it reads ELKPVYQCSRPPCPHTVDCFISRPTEKT. The chain crosses the membrane as a helical span at residues 224-244; sequence IFIIFMLVVASVSLLLNMLEI. The Cytoplasmic segment spans residues 245 to 511; it reads YHLGWKKLKQ…SRARSDDLAV (267 aa). A disordered region spans residues 397 to 511; it reads AEQQGKAPSS…SRARSDDLAV (115 aa). 2 stretches are compositionally biased toward low complexity: residues 403 to 415 and 440 to 456; these read APSS…TPSS and TTTN…ASGS.

The protein belongs to the connexin family. As to quaternary structure, a hemichannel or connexon is composed of a hexamer of connexins. A functional gap junction is formed by the apposition of two hemichannels. During early stages of lens development, interacts with the C-terminus of MIP. As to expression, detected in eye lens.

It is found in the cell membrane. The protein resides in the cell junction. The protein localises to the gap junction. Structural component of lens fiber gap junctions. Gap junctions are dodecameric channels that connect the cytoplasm of adjoining cells. They are formed by the docking of two hexameric hemichannels, one from each cell membrane. Small molecules and ions diffuse from one cell to a neighboring cell via the central pore. In Gallus gallus (Chicken), this protein is Gap junction alpha-3 protein (GJA3).